The chain runs to 585 residues: Arginine--tRNA ligase (585 aa).

A 'HIGH' region motif is present at residues 131 to 141 (ANPTGPMHVGH).

The protein belongs to the class-I aminoacyl-tRNA synthetase family. As to quaternary structure, monomer.

It is found in the cytoplasm. The catalysed reaction is tRNA(Arg) + L-arginine + ATP = L-arginyl-tRNA(Arg) + AMP + diphosphate. The chain is Arginine--tRNA ligase from Rhizobium etli (strain CIAT 652).